The following is a 223-amino-acid chain: Cytolethal distending toxin subunit A (223 aa).

Residues 1–15 (MKKFLPSLLLMGSVA) form the signal peptide. C16 carries N-palmitoyl cysteine lipidation. The S-diacylglycerol cysteine moiety is linked to residue C16. Positions 20 to 48 (QRMNDYSQPESQSDLAPKSSTIQPQPQPL) are disordered. The interval 91–102 (WALAKRNWLWAY) is mediates binding to target cells. In terms of domain architecture, Ricin B-type lectin spans 123-212 (HREYFRFVNQ…EPSRDQTWYL (90 aa)).

Heterotrimer of 3 subunits, CdtA, CdtB and CdtC.

Its subcellular location is the cell outer membrane. Its function is as follows. CDTs are cytotoxins which induce host cell distension, growth arrest in G2/M phase, nucleus swelling, and chromatin fragmentation in HeLa cells. CdtA, along with CdtC, probably forms a heterodimeric subunit required for the delivery of CdtB. The sequence is that of Cytolethal distending toxin subunit A (cdtA) from Haemophilus ducreyi (strain 35000HP / ATCC 700724).